The primary structure comprises 184 residues: NEDD8-conjugating enzyme UBC12 (184 aa).

Positions 10–29 (EKQRQAAQAQAPAQGRSAAS) are disordered. Over residues 14–29 (QAAQAQAPAQGRSAAS) the composition is skewed to low complexity. The 145-residue stretch at 30–174 (PAQLRVEKDL…VQATMMGGHL (145 aa)) folds into the UBC core domain. The active-site Glycyl thioester intermediate is Cys-112.

Belongs to the ubiquitin-conjugating enzyme family. UBC12 subfamily.

It carries out the reaction [E1 NEDD8-activating enzyme]-S-[NEDD8 protein]-yl-L-cysteine + [E2 NEDD8-conjugating enzyme]-L-cysteine = [E1 NEDD8-activating enzyme]-L-cysteine + [E2 NEDD8-conjugating enzyme]-S-[NEDD8-protein]-yl-L-cysteine.. Its pathway is protein modification; protein neddylation. Functionally, accepts the ubiquitin-like protein NEDD8/RUB1 from the UBA3-ULA1 E1 complex and catalyzes its covalent attachment to other proteins. The protein is NEDD8-conjugating enzyme UBC12 (UBC12) of Eremothecium gossypii (strain ATCC 10895 / CBS 109.51 / FGSC 9923 / NRRL Y-1056) (Yeast).